We begin with the raw amino-acid sequence, 631 residues long: Chaperone protein HtpG (631 aa).

An a; substrate-binding region spans residues 1–342 (MSEQTANKET…SNDLPLNVSR (342 aa)). Residues 343-559 (EILQDNKVTQ…DFEMGTQMAK (217 aa)) form a b region. The segment at 560-631 (LLEAAGQAAP…LSAMNQLLAK (72 aa)) is c.

The protein belongs to the heat shock protein 90 family. Homodimer.

The protein localises to the cytoplasm. In terms of biological role, molecular chaperone. Has ATPase activity. The polypeptide is Chaperone protein HtpG (Aliivibrio fischeri (strain ATCC 700601 / ES114) (Vibrio fischeri)).